The primary structure comprises 218 residues: uncharacterized protein (218 aa).

The next 2 helical transmembrane spans lie at 8-28 (LAVFLIILVGILLLGGIATAG) and 158-178 (ILFYTGISIIGAFFVSGFLLI).

It is found in the cell membrane. This is an uncharacterized protein from Mycoplasma genitalium (strain ATCC 33530 / DSM 19775 / NCTC 10195 / G37) (Mycoplasmoides genitalium).